The following is a 72-amino-acid chain: uncharacterized protein (72 aa).

A disordered region spans residues 52 to 72 (KGGRQRDEAVGVEELCKQHKE). Basic and acidic residues predominate over residues 55-72 (RQRDEAVGVEELCKQHKE).

It belongs to the YiiE family.

This is an uncharacterized protein from Escherichia coli O6:H1 (strain CFT073 / ATCC 700928 / UPEC).